The primary structure comprises 364 residues: Fructose-bisphosphate aldolase A (364 aa).

Y5 carries the post-translational modification Phosphotyrosine. Position 9 is a phosphothreonine (T9). Phosphoserine occurs at positions 36 and 39. K42 carries the N6-acetyllysine; alternate modification. K42 is covalently cross-linked (Glycyl lysine isopeptide (Lys-Gly) (interchain with G-Cter in SUMO1); alternate). K42 participates in a covalent cross-link: Glycyl lysine isopeptide (Lys-Gly) (interchain with G-Cter in SUMO2); alternate. R43 contacts beta-D-fructose 1,6-bisphosphate. S46 is subject to Phosphoserine. K99 carries the N6-(2-hydroxyisobutyryl)lysine modification. The residue at position 108 (K108) is an N6-acetyllysine. K111 carries the N6-acetyllysine; alternate modification. K111 carries the post-translational modification N6-malonyllysine; alternate. The residue at position 132 (S132) is a Phosphoserine. Residue K147 is modified to N6-(2-hydroxyisobutyryl)lysine. Catalysis depends on E188, which acts as the Proton acceptor. K230 functions as the Schiff-base intermediate with dihydroxyacetone-P in the catalytic mechanism. The residue at position 272 (S272) is a Phosphoserine. Beta-D-fructose 1,6-bisphosphate-binding positions include 272–274 (SGG), S301, and R304. K312 bears the N6-malonyllysine mark. K330 bears the N6-acetyllysine mark.

It belongs to the class I fructose-bisphosphate aldolase family. As to quaternary structure, homotetramer. Interacts with SNX9 and WAS. Interacts with FBP2; the interaction blocks FBP2 inhibition by physiological concentrations of AMP and reduces inhibition by Ca(2+).

It is found in the cytoplasm. Its subcellular location is the myofibril. It localises to the sarcomere. The protein localises to the i band. The protein resides in the m line. It carries out the reaction beta-D-fructose 1,6-bisphosphate = D-glyceraldehyde 3-phosphate + dihydroxyacetone phosphate. The protein operates within carbohydrate degradation; glycolysis; D-glyceraldehyde 3-phosphate and glycerone phosphate from D-glucose: step 4/4. Functionally, catalyzes the reversible conversion of beta-D-fructose 1,6-bisphosphate (FBP) into two triose phosphate and plays a key role in glycolysis and gluconeogenesis. In addition, may also function as scaffolding protein. In Pan troglodytes (Chimpanzee), this protein is Fructose-bisphosphate aldolase A (ALDOA).